Consider the following 250-residue polypeptide: Shieldin complex subunit 3 (250 aa).

Residues Gln28–Ser83 form a sufficient for interaction with MAD2L2 region. A compositionally biased stretch (polar residues) spans Leu108 to Lys119. A disordered region spans residues Leu108–Arg129.

As to quaternary structure, component of the shieldin complex, consisting of SHLD1, SHLD2, SHLD3 and MAD2L2/REV7. Within the complex, SHLD2 forms a scaffold which interacts with a SHLD3-MAD2L2 subcomplex via its N-terminus, and with SHLD1 via its C-terminus. Interacts with ASTE1.

The protein localises to the chromosome. Component of the shieldin complex, which plays an important role in repair of DNA double-stranded breaks (DSBs). During G1 and S phase of the cell cycle, the complex functions downstream of TP53BP1 to promote non-homologous end joining (NHEJ) and suppress DNA end resection. Mediates various NHEJ-dependent processes including immunoglobulin class-switch recombination, and fusion of unprotected telomeres. The chain is Shieldin complex subunit 3 from Homo sapiens (Human).